The following is a 470-amino-acid chain: Poly(A) polymerase catalytic subunit (470 aa).

Active-site residues include aspartate 192 and aspartate 194.

This sequence belongs to the poxviridae poly(A) polymerase catalytic subunit family. In terms of assembly, heterodimer of a large (catalytic) subunit and a small (regulatory) subunit.

It catalyses the reaction RNA(n) + ATP = RNA(n)-3'-adenine ribonucleotide + diphosphate. Functionally, polymerase that creates the 3'-poly(A) tail of mRNA's. This chain is Poly(A) polymerase catalytic subunit (PAPL), found in Molluscum contagiosum virus subtype 1 (MOCV).